A 273-amino-acid polypeptide reads, in one-letter code: Eukaryotic translation initiation factor 3 subunit G-2 (273 aa).

Residues Ser-193–Pro-271 form the RRM domain.

It belongs to the eIF-3 subunit G family. In terms of assembly, component of the eukaryotic translation initiation factor 3 (eIF-3) complex. The eIF-3 complex interacts with pix.

It localises to the cytoplasm. RNA-binding component of the eukaryotic translation initiation factor 3 (eIF-3) complex, which is involved in protein synthesis of a specialized repertoire of mRNAs and, together with other initiation factors, stimulates binding of mRNA and methionyl-tRNAi to the 40S ribosome. The eIF-3 complex specifically targets and initiates translation of a subset of mRNAs involved in cell proliferation. This subunit can bind 18S rRNA. The chain is Eukaryotic translation initiation factor 3 subunit G-2 from Drosophila melanogaster (Fruit fly).